We begin with the raw amino-acid sequence, 231 residues long: Large ribosomal subunit protein uL1 (231 aa).

Belongs to the universal ribosomal protein uL1 family. Part of the 50S ribosomal subunit.

Functionally, binds directly to 23S rRNA. The L1 stalk is quite mobile in the ribosome, and is involved in E site tRNA release. Its function is as follows. Protein L1 is also a translational repressor protein, it controls the translation of the L11 operon by binding to its mRNA. The protein is Large ribosomal subunit protein uL1 of Polaromonas naphthalenivorans (strain CJ2).